The primary structure comprises 87 residues: Putative membrane protein insertion efficiency factor (87 aa).

The protein belongs to the UPF0161 family.

The protein localises to the cell membrane. Could be involved in insertion of integral membrane proteins into the membrane. The protein is Putative membrane protein insertion efficiency factor of Streptococcus pyogenes serotype M12 (strain MGAS2096).